Reading from the N-terminus, the 932-residue chain is GPI ethanolamine phosphate transferase 1 (932 aa).

Residues 1-8 (MISLNKKL) lie on the Cytoplasmic side of the membrane. The chain crosses the membrane as a helical span at residues 9–29 (VLLVGVIFHVAFMWSIFDIYF). The Lumenal portion of the chain corresponds to 30–456 (VSPLIHGMKH…TYNWLFLRTL (427 aa)). N-linked (GlcNAc...) asparagine glycosylation is found at N138, N202, and N360. The helical transmembrane segment at 457 to 477 (VTIGFFGWIAVAFCSYLLAFV) threads the bilayer. The Cytoplasmic segment spans residues 478–486 (VQSDKPFTT). Residues 487–507 (SLPLKGVAYVALAILSGFFVF) traverse the membrane as a helical segment. The Lumenal portion of the chain corresponds to 508-509 (QK). A helical membrane pass occupies residues 510-530 (SPLHYHLYAVFPVVFWEAVLQ). Residues 531 to 551 (RRTAVAEGISILARRSTSKAP) are Cytoplasmic-facing. The helical transmembrane segment at 552–572 (ALAAILDIGLSLVLLEAIVYG) threads the bilayer. Over 573-577 (YFHRE) the chain is Lumenal. The helical transmembrane segment at 578–598 (IFSVCFGLATLWPFVHNFTVA) threads the bilayer. At 599-603 (KREWP) the chain is on the cytoplasmic side. A helical membrane pass occupies residues 604 to 624 (TTLAWVVMCAIMSSFTLLEVV). Residues 625 to 627 (KVE) lie on the Lumenal side of the membrane. Residues 628–648 (SIEQILLSGALMLVIGLVFTI) form a helical membrane-spanning segment. Topologically, residues 649–653 (HLQRK) are cytoplasmic. A helical transmembrane segment spans residues 654–674 (LALAASTVCVLFAQILLVVAT). Residues 675-696 (MYFTRESVESLTARNGLPLFSQ) lie on the Lumenal side of the membrane. A helical transmembrane segment spans residues 697–717 (VGGWISLLLSLAVPFLHFLGS). Residues 718-737 (DAKDYRLRLLIIFLAFGPTF) are Cytoplasmic-facing. A helical membrane pass occupies residues 738-758 (VILTISWEGFFYVCFFAILVI). Residues 759–786 (WIELETQMRDARVTPQTRADLTPGDFRM) are Lumenal-facing. Residues 787–807 (ALFTFFMSQIGFFGIGNIASI) form a helical membrane-spanning segment. At 808-828 (SSFSLDSVYRLIPVFDPFSMG) the chain is on the cytoplasmic side. The chain crosses the membrane as a helical span at residues 829 to 849 (ALLMFKILVPFAVLSACLGIL). Residues 850–859 (NLKLGVPPSA) are Lumenal-facing. A helical membrane pass occupies residues 860–880 (LFSMVLCVSDILTLNFFYLVV). Residues 881 to 900 (DEGSWLDIGTGISHYCIASG) are Cytoplasmic-facing. Residues 901 to 921 (LSLFMMVLEYLSGVLVAGVTI) form a helical membrane-spanning segment. The Lumenal segment spans residues 922–932 (APHVSKIKKDM).

It belongs to the PIGG/PIGN/PIGO family. PIGN subfamily.

The protein localises to the endoplasmic reticulum membrane. The protein operates within glycolipid biosynthesis; glycosylphosphatidylinositol-anchor biosynthesis. Ethanolamine phosphate transferase involved in glycosylphosphatidylinositol-anchor biosynthesis. Transfers ethanolamine phosphate to the first alpha-1,4-linked mannose of the glycosylphosphatidylinositol precursor of GPI-anchor. The polypeptide is GPI ethanolamine phosphate transferase 1 (MCD4) (Yarrowia lipolytica (strain CLIB 122 / E 150) (Yeast)).